A 387-amino-acid polypeptide reads, in one-letter code: tRNA-specific 2-thiouridylase MnmA (387 aa).

ATP is bound by residues 6-13 (AMSGGVDS) and leucine 32. Cysteine 101 acts as the Nucleophile in catalysis. Cysteine 101 and cysteine 199 are oxidised to a cystine. Residue glycine 125 coordinates ATP. Positions 148-150 (KDQ) are interaction with tRNA. Cysteine 199 (cysteine persulfide intermediate) is an active-site residue.

This sequence belongs to the MnmA/TRMU family.

The protein localises to the cytoplasm. It catalyses the reaction S-sulfanyl-L-cysteinyl-[protein] + uridine(34) in tRNA + AH2 + ATP = 2-thiouridine(34) in tRNA + L-cysteinyl-[protein] + A + AMP + diphosphate + H(+). Catalyzes the 2-thiolation of uridine at the wobble position (U34) of tRNA, leading to the formation of s(2)U34. This chain is tRNA-specific 2-thiouridylase MnmA, found in Clavibacter michiganensis subsp. michiganensis (strain NCPPB 382).